The sequence spans 217 residues: Thiamine-phosphate synthase (217 aa).

4-amino-2-methyl-5-(diphosphooxymethyl)pyrimidine is bound by residues 45-49 and Asn-81; that span reads QFRQK. The Mg(2+) site is built by Asp-82 and Asp-101. Ser-120 contributes to the 4-amino-2-methyl-5-(diphosphooxymethyl)pyrimidine binding site. A 2-[(2R,5Z)-2-carboxy-4-methylthiazol-5(2H)-ylidene]ethyl phosphate-binding site is contributed by 147 to 149; that stretch reads TPS. Residue Lys-150 coordinates 4-amino-2-methyl-5-(diphosphooxymethyl)pyrimidine. 2-[(2R,5Z)-2-carboxy-4-methylthiazol-5(2H)-ylidene]ethyl phosphate contacts are provided by residues Gly-179 and 197–198; that span reads IS.

It belongs to the thiamine-phosphate synthase family. It depends on Mg(2+) as a cofactor.

The catalysed reaction is 2-[(2R,5Z)-2-carboxy-4-methylthiazol-5(2H)-ylidene]ethyl phosphate + 4-amino-2-methyl-5-(diphosphooxymethyl)pyrimidine + 2 H(+) = thiamine phosphate + CO2 + diphosphate. The enzyme catalyses 2-(2-carboxy-4-methylthiazol-5-yl)ethyl phosphate + 4-amino-2-methyl-5-(diphosphooxymethyl)pyrimidine + 2 H(+) = thiamine phosphate + CO2 + diphosphate. It carries out the reaction 4-methyl-5-(2-phosphooxyethyl)-thiazole + 4-amino-2-methyl-5-(diphosphooxymethyl)pyrimidine + H(+) = thiamine phosphate + diphosphate. It participates in cofactor biosynthesis; thiamine diphosphate biosynthesis; thiamine phosphate from 4-amino-2-methyl-5-diphosphomethylpyrimidine and 4-methyl-5-(2-phosphoethyl)-thiazole: step 1/1. In terms of biological role, condenses 4-methyl-5-(beta-hydroxyethyl)thiazole monophosphate (THZ-P) and 2-methyl-4-amino-5-hydroxymethyl pyrimidine pyrophosphate (HMP-PP) to form thiamine monophosphate (TMP). The polypeptide is Thiamine-phosphate synthase (Helicobacter pylori (strain J99 / ATCC 700824) (Campylobacter pylori J99)).